The primary structure comprises 230 residues: uncharacterized protein (230 aa).

Residues glutamate 74, glutamate 76, and aspartate 105 each contribute to the a divalent metal cation site.

This sequence belongs to the FAH family.

This is an uncharacterized protein from Pyrococcus horikoshii (strain ATCC 700860 / DSM 12428 / JCM 9974 / NBRC 100139 / OT-3).